Reading from the N-terminus, the 337-residue chain is Glyceraldehyde-3-phosphate dehydrogenase 2 (337 aa).

Residues 11–12 (RI), Asp-35, Arg-79, and Thr-121 each bind NAD(+). Residues 153–155 (SCT), Thr-184, Arg-199, 212–213 (TG), and Arg-235 contribute to the D-glyceraldehyde 3-phosphate site. Cys-154 (nucleophile) is an active-site residue. Position 317 (Asn-317) interacts with NAD(+).

Belongs to the glyceraldehyde-3-phosphate dehydrogenase family. As to quaternary structure, homotetramer.

The protein resides in the cytoplasm. It catalyses the reaction D-glyceraldehyde 3-phosphate + phosphate + NADP(+) = (2R)-3-phospho-glyceroyl phosphate + NADPH + H(+). It carries out the reaction D-glyceraldehyde 3-phosphate + phosphate + NAD(+) = (2R)-3-phospho-glyceroyl phosphate + NADH + H(+). Its pathway is carbohydrate degradation; glycolysis; pyruvate from D-glyceraldehyde 3-phosphate: step 1/5. Functionally, involved in photosynthetic carbon assimilation. Catalyzes the NAD(P)-dependent oxidative phosphorylation of glyceraldehyde 3-phosphate (G3P) to 1,3-bisphosphoglycerate (BPG). The first reaction step involves the formation of a hemiacetal intermediate between G3P and a cysteine residue, and this hemiacetal intermediate is then oxidized to a thioester, with concomitant reduction of NAD to NADH. The reduced NADH is then exchanged with the second NAD, and the thioester is attacked by a nucleophilic inorganic phosphate to produce BPG. It can use both NADP and NAD. The chain is Glyceraldehyde-3-phosphate dehydrogenase 2 (gap2) from Synechocystis sp. (strain ATCC 27184 / PCC 6803 / Kazusa).